A 658-amino-acid chain; its full sequence is Probable methyl-accepting chemotaxis protein BT9727_0469 (658 aa).

The Cytoplasmic portion of the chain corresponds to 1-14 (MLQGKLRRSSLKAK). The helical transmembrane segment at 15–35 (LLVSFVIVLILPSIVIGWTSY) threads the bilayer. At 36-283 (QQAKTNFNET…ANPIFYKTLT (248 aa)) the chain is on the extracellular side. The stretch at 44 to 109 (ETILQSAEDN…NKLHPEIEAI (66 aa)) forms a coiled coil. The region spanning 150 to 221 (ITAPYKSSTT…AHPTMKPGDK (72 aa)) is the Cache domain. Residues 284–304 (VIGISLIIGGVLIYFIIASII) form a helical membrane-spanning segment. Residues 301–353 (ASIISPLKQLVISSKKISEGDLTETITVHSKDEIGQLGESFNEMAASLHHVIS) form the HAMP domain. Topologically, residues 305–658 (SPLKQLVISS…LQEMIGKFKV (354 aa)) are cytoplasmic. Glutamate methyl ester (Glu) is present on glutamate 368. The region spanning 372–622 (SMKQTSEATE…ENAASVQNIA (251 aa)) is the Methyl-accepting transducer domain. Glutamine 592 is subject to Deamidated glutamine. The residue at position 592 (glutamine 592) is a Glutamate methyl ester (Gln). Residues glutamate 627 and glutamate 634 each carry the glutamate methyl ester (Glu) modification.

The protein belongs to the methyl-accepting chemotaxis (MCP) protein family.

Its subcellular location is the cell membrane. Its function is as follows. Chemotactic-signal transducers respond to changes in the concentration of attractants and repellents in the environment, transduce a signal from the outside to the inside of the cell, and facilitate sensory adaptation through the variation of the level of methylation. The sequence is that of Probable methyl-accepting chemotaxis protein BT9727_0469 from Bacillus thuringiensis subsp. konkukian (strain 97-27).